The sequence spans 131 residues: Fumarate reductase subunit C (131 aa).

3 helical membrane passes run 30–50, 57–77, and 109–129; these read EGTA…LFAL, WMGF…LITL, and IIKG…YVAL.

Belongs to the FrdC family. As to quaternary structure, part of an enzyme complex containing four subunits: a flavoprotein (FrdA), an iron-sulfur protein (FrdB), and two hydrophobic anchor proteins (FrdC and FrdD).

It localises to the cell inner membrane. Functionally, two distinct, membrane-bound, FAD-containing enzymes are responsible for the catalysis of fumarate and succinate interconversion; fumarate reductase is used in anaerobic growth, and succinate dehydrogenase is used in aerobic growth. Anchors the catalytic components of the fumarate reductase complex to the cell inner membrane, binds quinones. This chain is Fumarate reductase subunit C, found in Salmonella heidelberg (strain SL476).